The chain runs to 333 residues: Peroxisome biogenesis protein 2 (333 aa).

At 1–38 (MTPSTPADDAWIRSYQRLLPESQSLLASRRSVIPVAIS) the chain is on the peroxisomal matrix side. The helical transmembrane segment at 39 to 65 (RVNQFDAARLDVEMSAMLKEQLVKVFT) threads the bilayer. Over 66–71 (LMKPGM) the chain is Cytoplasmic. Residues 72–97 (LFQYEPELDAFLEFLIWRFSIWVDKP) form a helical membrane-spanning segment. At 98–131 (TPGNALMNLRYRDERGVVAQHLGKVRTGLEGPGL) the chain is on the peroxisomal matrix side. The helical transmembrane segment at 132 to 158 (TSPQKIWYCVASVGGQYLFSRLQSFSA) threads the bilayer. Over 159 to 168 (FRRWGDSEQR) the chain is Cytoplasmic. Residues 169 to 199 (PLARRLWTLVQRIEGIYKAASFLNLLSFLYT) traverse the membrane as a helical segment. The Peroxisomal matrix segment spans residues 200 to 226 (GRYRNLIEKALKARLVYRSPHMNRSVS). A helical membrane pass occupies residues 227–250 (FEYMNRQLVWNEFSEMLLLLLPLL). Over 251-333 (NSSAVKNILS…IQREGVSSGK (83 aa)) the chain is Cytoplasmic. Residues C277, C280, C293, H295, C298, C301, C314, and C317 each coordinate Zn(2+). An RING-type zinc finger spans residues 277–318 (CPICQVDPAIPFIALPCQHRYCYYCIRTRCASAASFRCLRCN).

The protein belongs to the pex2/pex10/pex12 family. As to quaternary structure, component of the PEX2-PEX10-PEX12 retrotranslocation channel. Interacts with DSK2a and DSK2b. Expressed in roots, stems, leaves, flowers, pollen, ovules, seeds and siliques.

The protein resides in the peroxisome membrane. It carries out the reaction [E2 ubiquitin-conjugating enzyme]-S-ubiquitinyl-L-cysteine + [acceptor protein]-L-cysteine = [E2 ubiquitin-conjugating enzyme]-L-cysteine + [acceptor protein]-S-ubiquitinyl-L-cysteine.. Its pathway is protein modification; protein ubiquitination. Its function is as follows. E3 ubiquitin-protein ligase component of a retrotranslocation channel required for peroxisome organization by mediating export of the PEX5 receptor from peroxisomes to the cytosol, thereby promoting PEX5 recycling. The retrotranslocation channel is composed of PEX2, PEX10 and PEX12; each subunit contributing transmembrane segments that coassemble into an open channel that specifically allows the passage of PEX5 through the peroxisomal membrane. PEX2 also regulates peroxisome organization by acting as a E3 ubiquitin-protein ligase. PEX2 ubiquitinates PEX5 during its passage through the retrotranslocation channel: catalyzes monoubiquitination of PEX5 at 'Cys-6', a modification that acts as a signal for PEX5 extraction into the cytosol. In Arabidopsis thaliana (Mouse-ear cress), this protein is Peroxisome biogenesis protein 2 (PEX2).